Consider the following 303-residue polypeptide: Bifunctional protein FolD (303 aa).

NADP(+)-binding positions include 165–167 (GRS), Ser-190, and Ile-231.

Belongs to the tetrahydrofolate dehydrogenase/cyclohydrolase family. As to quaternary structure, homodimer.

The enzyme catalyses (6R)-5,10-methylene-5,6,7,8-tetrahydrofolate + NADP(+) = (6R)-5,10-methenyltetrahydrofolate + NADPH. It carries out the reaction (6R)-5,10-methenyltetrahydrofolate + H2O = (6R)-10-formyltetrahydrofolate + H(+). It functions in the pathway one-carbon metabolism; tetrahydrofolate interconversion. Functionally, catalyzes the oxidation of 5,10-methylenetetrahydrofolate to 5,10-methenyltetrahydrofolate and then the hydrolysis of 5,10-methenyltetrahydrofolate to 10-formyltetrahydrofolate. The protein is Bifunctional protein FolD of Prochlorococcus marinus (strain NATL2A).